Here is a 323-residue protein sequence, read N- to C-terminus: Fructose-1,6-bisphosphatase class 1 (323 aa).

Residues glutamate 84, aspartate 103, leucine 105, and aspartate 106 each coordinate Mg(2+). Substrate is bound by residues 106–109 (DGSS), asparagine 198, and lysine 264. Residue glutamate 270 participates in Mg(2+) binding.

Belongs to the FBPase class 1 family. As to quaternary structure, homotetramer. Mg(2+) serves as cofactor.

The protein resides in the cytoplasm. The enzyme catalyses beta-D-fructose 1,6-bisphosphate + H2O = beta-D-fructose 6-phosphate + phosphate. It participates in carbohydrate biosynthesis; gluconeogenesis. The polypeptide is Fructose-1,6-bisphosphatase class 1 (Cellvibrio japonicus (strain Ueda107) (Pseudomonas fluorescens subsp. cellulosa)).